Reading from the N-terminus, the 212-residue chain is HTH-type transcriptional repressor NicS (212 aa).

One can recognise an HTH tetR-type domain in the interval 14 to 74 (DRTRDNILKA…SVLEHIYASF (61 aa)). The H-T-H motif DNA-binding region spans 37 to 56 (RIEQISTLAKSNDRMIYYYF).

It functions in the pathway cofactor degradation; nicotinate degradation [regulation]. Transcriptional repressor for the nicAB operon, encoding the upper aerobic nicotinate degradation pathway. Acts under non-induced conditions: repression of the nicAB operon becomes alleviated in presence of either nicotinate or 6-hydroxynicotinate (6HNA). In Pseudomonas putida (strain ATCC 47054 / DSM 6125 / CFBP 8728 / NCIMB 11950 / KT2440), this protein is HTH-type transcriptional repressor NicS (nicS).